The following is a 321-amino-acid chain: D-alanine--D-alanine ligase (321 aa).

Positions 121–315 (RSWFLTNNIN…FVNLIEEILK (195 aa)) constitute an ATP-grasp domain. 148 to 199 (IKRPYVIKPFTQGSSIGVEVIFEEDDFNFANYDFPYGDEVIIEKYIKGRELQ) contributes to the ATP binding site. Glu268, Glu282, and Asn284 together coordinate Mg(2+).

This sequence belongs to the D-alanine--D-alanine ligase family. It depends on Mg(2+) as a cofactor. The cofactor is Mn(2+).

The protein resides in the cytoplasm. It carries out the reaction 2 D-alanine + ATP = D-alanyl-D-alanine + ADP + phosphate + H(+). The protein operates within cell wall biogenesis; peptidoglycan biosynthesis. Cell wall formation. This is D-alanine--D-alanine ligase from Rickettsia bellii (strain OSU 85-389).